The chain runs to 85 residues: Large ribosomal subunit protein bL27 (85 aa).

Belongs to the bacterial ribosomal protein bL27 family.

The sequence is that of Large ribosomal subunit protein bL27 from Azobacteroides pseudotrichonymphae genomovar. CFP2.